The primary structure comprises 180 residues: Epididymal-specific lipocalin-6 (180 aa).

Positions 1 to 20 are cleaved as a signal peptide; the sequence is MGGLLLAALLALVAVPRAQA. A disulfide bridge links C81 with C174.

It belongs to the calycin superfamily. Lipocalin family.

The protein localises to the secreted. Functionally, may play a role in male fertility. The chain is Epididymal-specific lipocalin-6 (LCN6) from Macaca mulatta (Rhesus macaque).